Here is a 99-residue protein sequence, read N- to C-terminus: Large ribosomal subunit protein eL42 (99 aa).

Belongs to the eukaryotic ribosomal protein eL42 family.

This chain is Large ribosomal subunit protein eL42 (RPL44), found in Chlamydomonas reinhardtii (Chlamydomonas smithii).